The sequence spans 508 residues: UDP-N-acetylmuramoylalanine--D-glutamate ligase (508 aa).

ATP is bound at residue 138–144; it reads GTNGKTT.

The protein belongs to the MurCDEF family.

Its subcellular location is the cytoplasm. The catalysed reaction is UDP-N-acetyl-alpha-D-muramoyl-L-alanine + D-glutamate + ATP = UDP-N-acetyl-alpha-D-muramoyl-L-alanyl-D-glutamate + ADP + phosphate + H(+). The protein operates within cell wall biogenesis; peptidoglycan biosynthesis. Functionally, cell wall formation. Catalyzes the addition of glutamate to the nucleotide precursor UDP-N-acetylmuramoyl-L-alanine (UMA). In Bordetella avium (strain 197N), this protein is UDP-N-acetylmuramoylalanine--D-glutamate ligase.